We begin with the raw amino-acid sequence, 166 residues long: Lithostathine-1-alpha (166 aa).

An N-terminal signal peptide occupies residues M1–G22. Q23 carries the post-translational modification Pyrrolidone carboxylic acid. T27 is a glycosylation site (O-linked (GalNAc) threonine). In terms of domain architecture, C-type lectin spans I34–F164. Intrachain disulfides connect C36–C47, C64–C162, and C137–C154.

In terms of processing, the composition of the O-linked carbohydrate on Thr-27 is complex and varied. In the crystallographic structure, the attached sugar appears to be N-acetylglucosamine, typical of an intracellular protein, rather than N-acetylgalactosamine. In pancreatic acinar cells and, in lower levels, in brain. Enhanced expression of PSP-related transcripts and intraneuronal accumulation of PSP-like proteins is found in brain from Alzheimer disease and Down syndrome patients.

The protein localises to the secreted. Might act as an inhibitor of spontaneous calcium carbonate precipitation. May be associated with neuronal sprouting in brain, and with brain and pancreas regeneration. The sequence is that of Lithostathine-1-alpha (REG1A) from Homo sapiens (Human).